The sequence spans 360 residues: NAD(P)H-quinone oxidoreductase subunit 1, chloroplastic (360 aa).

The next 9 helical transmembrane spans lie at 27-47, 98-118, 129-149, 165-185, 203-223, 248-268, 269-289, 297-317, and 340-360; these read IWIFVPIFSLILGIITGVLVI, FSIGPSIAVISILLSYSVIPF, IGIFLWIAISSIAPIGLLMSG, AAQSISYEIPLTLCVLSISLL, FWGWNLWRQPIGFIIFLISSL, YSGIKFGLFYVASYLNLLISS, LFVTVLYLGGWNISIPYISIL, IFGTTIGIFITLAKTYLFLFI, and FLLPISLGNLLLTTSFQLFSL.

This sequence belongs to the complex I subunit 1 family. NDH is composed of at least 16 different subunits, 5 of which are encoded in the nucleus.

The protein localises to the plastid. The protein resides in the chloroplast thylakoid membrane. It catalyses the reaction a plastoquinone + NADH + (n+1) H(+)(in) = a plastoquinol + NAD(+) + n H(+)(out). The catalysed reaction is a plastoquinone + NADPH + (n+1) H(+)(in) = a plastoquinol + NADP(+) + n H(+)(out). In terms of biological role, NDH shuttles electrons from NAD(P)H:plastoquinone, via FMN and iron-sulfur (Fe-S) centers, to quinones in the photosynthetic chain and possibly in a chloroplast respiratory chain. The immediate electron acceptor for the enzyme in this species is believed to be plastoquinone. Couples the redox reaction to proton translocation, and thus conserves the redox energy in a proton gradient. The polypeptide is NAD(P)H-quinone oxidoreductase subunit 1, chloroplastic (Barbarea verna (Land cress)).